The following is a 357-amino-acid chain: Neuronal-specific septin-3 (357 aa).

Residues 1 to 10 (MSKGLPETRT) show a composition bias toward basic and acidic residues. The disordered stretch occupies residues 1–29 (MSKGLPETRTDAAMSELVPEPRPKPAVPM). The Septin-type G domain occupies 58-330 (TGFDFNIMVV…ETYRAKRLND (273 aa)). A G1 motif region spans residues 68-75 (GQSGLGKS). 68-75 (GQSGLGKS) contributes to the GTP binding site. The residue at position 91 (serine 91) is a Phosphoserine. Residue threonine 102 participates in GTP binding. The segment at 125–128 (DTPG) is G3 motif. Residues 207-210 (AKAD) are G4 motif. GTP is bound by residues 208-216 (KADTMTLEE), glycine 264, and arginine 279.

Belongs to the TRAFAC class TrmE-Era-EngA-EngB-Septin-like GTPase superfamily. Septin GTPase family. Septins polymerize into heterooligomeric protein complexes that form filaments, and can associate with cellular membranes, actin filaments and microtubules. GTPase activity is required for filament formation. Phosphorylated by PKG on serine residues. Phosphorylated by PKG on Ser-91.

It localises to the cytoplasm. The protein localises to the cytoskeleton. Its subcellular location is the synapse. Its function is as follows. Filament-forming cytoskeletal GTPase. May play a role in cytokinesis (Potential). The polypeptide is Neuronal-specific septin-3 (Bos taurus (Bovine)).